A 695-amino-acid chain; its full sequence is Phosphate acetyltransferase (695 aa).

The phosphate acetyltransferase stretch occupies residues Phe-374–Arg-695.

This sequence in the N-terminal section; belongs to the CobB/CobQ family. The protein in the C-terminal section; belongs to the phosphate acetyltransferase and butyryltransferase family. In terms of assembly, homohexamer.

The protein resides in the cytoplasm. The catalysed reaction is acetyl-CoA + phosphate = acetyl phosphate + CoA. Its pathway is metabolic intermediate biosynthesis; acetyl-CoA biosynthesis; acetyl-CoA from acetate: step 2/2. Functionally, involved in acetate metabolism. This chain is Phosphate acetyltransferase (pta), found in Pseudomonas putida (strain ATCC 47054 / DSM 6125 / CFBP 8728 / NCIMB 11950 / KT2440).